A 429-amino-acid polypeptide reads, in one-letter code: Fez family zinc finger protein 1 (429 aa).

The Engrailed homology 1 repressor signature appears at 29–44 (PLAFSIERIMARTPEP). 6 C2H2-type zinc fingers span residues 247–269 (FTCE…MPVH), 275–297 (FVCK…KIIH), 303–325 (HKCN…TRIH), 331–353 (FICE…KLTH), 359–381 (FKCN…MHTH), and 387–410 (FTCP…RKLH). Residues 409–429 (LHDISPGPHSPPTPTGNTEGQ) form a disordered region.

The protein belongs to the krueppel C2H2-type zinc-finger protein family.

It is found in the nucleus. Functionally, transcription repressor. Involved in the development of the forebrain region. The sequence is that of Fez family zinc finger protein 1 (fezf1) from Danio rerio (Zebrafish).